The primary structure comprises 417 residues: Type II methyltransferase M.KpnI (417 aa).

It belongs to the N(4)/N(6)-methyltransferase family.

It carries out the reaction a 2'-deoxyadenosine in DNA + S-adenosyl-L-methionine = an N(6)-methyl-2'-deoxyadenosine in DNA + S-adenosyl-L-homocysteine + H(+). Functionally, a beta subtype methylase, recognizes the double-stranded sequence 5'-GGTACC-3', methylates A-4 on both strands, and protects the DNA from cleavage by the KpnI endonuclease. This chain is Type II methyltransferase M.KpnI, found in Klebsiella pneumoniae.